Consider the following 75-residue polypeptide: uncharacterized protein (75 aa).

The 44-residue stretch at 29–72 (EVYHVESGDTLWTIAKSFEIPVQQLMNLNKLSSDRIYPGQIIKI) folds into the LysM domain.

This is an uncharacterized protein from Bacillus subtilis (strain 168).